Consider the following 109-residue polypeptide: Toxin YpjF (109 aa).

Belongs to the CbtA/YkfI/YpjF toxin family. Interacts with FtsZ but not MreB. Another group finds interaction with FtsZ and MreB.

Functionally, toxic component of a type IV toxin-antitoxin (TA) system. Acts as a dual toxin inhibitor that blocks cell division and cell elongation in genetically separable interactions with FtsZ and MreB. Overexpression results in inhibition of growth in liquid cultures. Overexpression leads to formation of lemon-shaped cells; inactivated by overexpression of cognate antitoxin YfjZ but not when the 2 genes are coexpressed from the same plasmid. Also neutralized by overexpression of non-cognate antitoxins YafW and CbeA. The sequence is that of Toxin YpjF (ypjF) from Escherichia coli (strain K12).